The chain runs to 237 residues: uncharacterized protein (237 aa).

This is an uncharacterized protein from Schizosaccharomyces pombe (strain 972 / ATCC 24843) (Fission yeast).